The sequence spans 377 residues: Glutamate 5-kinase (377 aa).

K20 is a binding site for ATP. 3 residues coordinate substrate: S59, D146, and N158. Residues 178–179 and 220–226 each bind ATP; these read SD and TGGMSTK. The PUA domain occupies 285–363; sequence RGTLTVDAGA…ADIEAVLGYR (79 aa).

Belongs to the glutamate 5-kinase family.

Its subcellular location is the cytoplasm. The enzyme catalyses L-glutamate + ATP = L-glutamyl 5-phosphate + ADP. It participates in amino-acid biosynthesis; L-proline biosynthesis; L-glutamate 5-semialdehyde from L-glutamate: step 1/2. In terms of biological role, catalyzes the transfer of a phosphate group to glutamate to form L-glutamate 5-phosphate. This Myxococcus xanthus (strain DK1622) protein is Glutamate 5-kinase.